The chain runs to 190 residues: Corticoliberin (190 aa).

An N-terminal signal peptide occupies residues 1 to 24 (MRLRLLVSVGVLLVALLPSPPCRA). A propeptide spanning residues 25-147 (LLSRGPIPGA…QEAPAARKRR (123 aa)) is cleaved from the precursor. Disordered stretches follow at residues 33–57 (GARQ…QEPQ) and 116–151 (RRPF…SQEP). Position 188 is an alanine amide (Ala-188).

It belongs to the sauvagine/corticotropin-releasing factor/urotensin I family. In terms of assembly, interacts (via C-terminus) with CRFR1 (via N-terminal extracellular domain). Produced by the hypothalamus.

Its subcellular location is the secreted. Functionally, hormone regulating the release of corticotropin from pituitary gland. Induces NLRP6 in intestinal epithelial cells, hence may influence gut microbiota profile. This is Corticoliberin (CRH) from Bos taurus (Bovine).